A 218-amino-acid polypeptide reads, in one-letter code: DNA ADP-ribosyl transferase (218 aa).

Positions 14-217 constitute a DarT domain; the sequence is ALIWRIVHRD…SVHTRSGWYF (204 aa). NAD(+) is bound by residues 18 to 20 and Arg57; that span reads RIV. The segment at 41–59 is NAD(+)-binding element; the sequence is QAENWINIGNPELIGKRAG. Arg57 acts as the Proton acceptor in catalysis. The segment at 123–170 is ADP-ribosylating turn-turn loop; sequence TDSHAYYNWTNYYTSLNSLDQIDWPILQARDFRRDPDDPAKFERYQAE. Glu170 is an active-site residue.

It belongs to the DarT ADP-ribosyltransferase family. In terms of assembly, interacts with cognate antitoxin DarG (via C-terminus); this heterodimeric complex neutralizes the toxic effect of DarT by preventing ssDNA binding to DarT and consequently inactivating the toxin by direct protein-protein interactions.

It carries out the reaction a thymidine in DNA + NAD(+) = an N-(ADP-alpha-D-ribosyl)-thymidine in DNA + nicotinamide + H(+). Functionally, toxic component of the hybrid type II/IV toxin-antitoxin (TA) system DarTG, which plays a crucial role in controlling bacterial growth and bacteriophage infection. ADP-ribosylates ssDNA in the sequence TTT/TCT. In case of phage infection, DarT toxin ADP-ribosylates DNA, which inhibits both viral DNA and RNA synthesis and leads to abortive infection. Its toxic effect is neutralized by cognate antitoxin DarG. May target ssDNA loops during DNA replication, probably modifies thymidine. Wild-type protein cannot be expressed at low levels in the absence of its cognate antitoxin, but a mutant protein (G49D) can be expressed, which slows growth, rapidly inhibits DNA replication, and induces RecA expression and the SOS response. The slow growth phenotype can be suppressed by cognate antitoxin DarG. Has no activity on dsDNA in vitro. In vivo ADP-ribosylates genomic DNA (gDNA). Genetic data strongly suggests ADP-ribosylation by DarT probably generates ssDNA gaps that are repaired by the RecFOR-mediated homologous recombination pathway (RuvAB, RecG) and resolved by RuvC. In some cases these gaps probably migrate into dsDNA, where they are resolved by nucleotide excision repair (NER) detected by UvrAB, excised by UvrC, removed by UvrD, and repaired by Pol I and ligase. Other pathways may also be involved in ADP-ribosylation removal from DNA. This Escherichia coli O127:H6 (strain E2348/69 / EPEC) protein is DNA ADP-ribosyl transferase.